Consider the following 1241-residue polypeptide: Putative ABC transporter B family member 8 (1241 aa).

Residues 24 to 44 (FADWIDIVLMVLGSVGAIGDG) form a helical membrane-spanning segment. The 291-residue stretch at 33-323 (MVLGSVGAIG…ALTEIRYFSE (291 aa)) folds into the ABC transmembrane type-1 1 domain. A glycan (N-linked (GlcNAc...) asparagine) is linked at asparagine 48. Transmembrane regions (helical) follow at residues 82 to 102 (LYFV…GYCW), 157 to 177 (VPIF…SAYF), 183 to 203 (VVAI…GKYL), 263 to 283 (GLAV…AWYG), and 297 to 317 (IYAA…ALTE). The region spanning 360–596 (VEFERVTLVY…NNHYAKLVKL (237 aa)) is the ABC transporter 1 domain. 395–402 (GASGSGKS) is a binding site for ATP. Asparagine 571, asparagine 632, and asparagine 648 each carry an N-linked (GlcNAc...) asparagine glycan. The ABC transmembrane type-1 2 domain maps to 676 to 964 (SLVGCISATT…AGSMTSDLAK (289 aa)). Transmembrane regions (helical) follow at residues 686-706 (FGAI…AFFA) and 716-736 (IHIY…LNLL). A glycan (N-linked (GlcNAc...) asparagine) is linked at asparagine 773. 2 consecutive transmembrane segments (helical) span residues 797–815 (ISLL…IIGL) and 821–838 (LALV…CFYT). Asparagine 855 carries N-linked (GlcNAc...) asparagine glycosylation. A run of 2 helical transmembrane segments spans residues 899 to 919 (AWLA…TWAL) and 933 to 953 (ISAG…KVIA). Residues 998-1236 (IELKNIDFSY…GGQFSRLAHA (239 aa)) enclose the ABC transporter 2 domain. 1033–1040 (GTSGCGKS) contributes to the ATP binding site. N-linked (GlcNAc...) asparagine glycosylation occurs at asparagine 1187.

This sequence belongs to the ABC transporter superfamily. ABCB family. Multidrug resistance exporter (TC 3.A.1.201) subfamily.

It is found in the membrane. In Arabidopsis thaliana (Mouse-ear cress), this protein is Putative ABC transporter B family member 8 (ABCB8).